Here is a 1733-residue protein sequence, read N- to C-terminus: Protein NETWORKED 1D (1733 aa).

Positions 12–92 (YSWWWDSHIS…ERYDHATGVI (81 aa)) constitute an NAB domain. 4 coiled-coil regions span residues 195 to 816 (KEIN…RESS), 897 to 931 (LIAE…QIDS), 960 to 1043 (DENS…QKLI), and 1196 to 1386 (ARSA…NDLM). The disordered stretch occupies residues 1456–1476 (LKTSSARRSRRRNGSLRKQNH). A compositionally biased stretch (basic residues) spans 1460–1470 (SARRSRRRNGS). Coiled coils occupy residues 1553 to 1627 (ANKR…KVQN) and 1653 to 1686 (SEQA…DRED). Positions 1628 to 1656 (GFERSDGSKSSMDLDENESSRRRRISEQA) are disordered.

The protein belongs to the NET family.

Plant-specific actin binding protein. May be part of a membrane-cytoskeletal adapter complex. In Arabidopsis thaliana (Mouse-ear cress), this protein is Protein NETWORKED 1D.